We begin with the raw amino-acid sequence, 352 residues long: Guanidino acid hydrolase, mitochondrial (352 aa).

Residues 1-35 (MLRLLASGCARGPGPGVGARPAAGLFHPGRRQSRQ) constitute a mitochondrion transit peptide. Positions 11-49 (RGPGPGVGARPAAGLFHPGRRQSRQASDAPRNQPPSPEF) are disordered. Positions 162, 185, 187, and 189 each coordinate Mn(2+). K193 is modified (N6-acetyllysine). K217 is subject to N6-acetyllysine; alternate. K217 is subject to N6-succinyllysine; alternate. 2 residues coordinate Mn(2+): D276 and D278.

It belongs to the ureohydrolase superfamily. Arginase family. Mn(2+) serves as cofactor. As to expression, highly expressed in liver and kidney. Also found in skeletal muscle, fetal liver, brain, testis, skin and the gastrointestinal tract. Within brain, expression is higher in the cerebral cortex with lower levels in the medulla and spinal cord.

It is found in the mitochondrion. The enzyme catalyses 3-guanidinopropanoate + H2O = urea + beta-alanine. The catalysed reaction is 4-guanidinobutanoate + H2O = urea + 4-aminobutanoate. It catalyses the reaction taurocyamine + H2O = urea + taurine. It carries out the reaction L-arginine + H2O = urea + L-ornithine. It functions in the pathway nitrogen metabolism; urea cycle; L-ornithine and urea from L-arginine: step 1/1. Its function is as follows. Hydrolyzes linear guanidino acids to form urea and the corresponding amines. Displays specificity for substrates having a negatively charged head group and short chains including taurocyamine, guanidino propanoic and butanoic acids. May protect cells by detoxifying potentially harmful amounts of guanidino acids. Metabolizes L-arginine with low efficiency. In Homo sapiens (Human), this protein is Guanidino acid hydrolase, mitochondrial (AGMAT).